Here is an 840-residue protein sequence, read N- to C-terminus: Wings apart-like protein 2 (840 aa).

Disordered stretches follow at residues 1-37 (MMER…EPVD), 56-78 (SDND…FGSN), and 532-594 (FDLE…DHHV). Residues 546 to 557 (KQKKSKGQKRKG) are compositionally biased toward basic residues. Residues 558 to 567 (SYRDKKDERS) show a composition bias toward basic and acidic residues. Positions 569 to 585 (QLFSSQEESNHGLNSQE) are enriched in polar residues. The WAPL domain maps to 764 to 819 (KEAEKMIVEAYSALLLAFLSTESRSIRNAIRDYLPKRDMAILVPVLDRFVAFHTTL).

Belongs to the WAPL family. Interacts with the cohesin complex throughout the cell cycle. As to expression, expressed in roots, leaves, buds and siliques.

The protein resides in the nucleus. It is found in the chromosome. Functionally, regulator of sister chromatid cohesion in meiosis which negatively regulates cohesin association with chromatin, acting as an antagonist of CTF7. Cohesion ensures that chromosome partitioning is accurate in both meiotic and mitotic cells and plays an important role in DNA repair. Essential for the prophase removal of cohesin during meiosis thus determining the timely release of meiotic cohesion. Important for proper spindle attachment and assembly during meiosis. Helps to prevent abnormal centromere association during prophase I in meiocytes. Required for early embryonic patterning. Also involved in chromosome segregation during mitosis. The polypeptide is Wings apart-like protein 2 (Arabidopsis thaliana (Mouse-ear cress)).